The chain runs to 501 residues: Proline--tRNA ligase (501 aa).

It belongs to the class-II aminoacyl-tRNA synthetase family.

The catalysed reaction is tRNA(Pro) + L-proline + ATP = L-prolyl-tRNA(Pro) + AMP + diphosphate. This is Proline--tRNA ligase from Encephalitozoon cuniculi (strain GB-M1) (Microsporidian parasite).